Here is a 123-residue protein sequence, read N- to C-terminus: UPF0102 protein CLJ_B2665 (123 aa).

Belongs to the UPF0102 family.

This chain is UPF0102 protein CLJ_B2665, found in Clostridium botulinum (strain 657 / Type Ba4).